The chain runs to 287 residues: Glutamate racemase (287 aa).

A compositionally biased stretch (polar residues) spans 1 to 15 (MATKPQDANTTSREA). The disordered stretch occupies residues 1-25 (MATKPQDANTTSREAITSKADSPPR). Residues 32 to 33 (DS) and 64 to 65 (YG) each bind substrate. Catalysis depends on Cys-96, which acts as the Proton donor/acceptor. 97–98 (NT) is a substrate binding site. The active-site Proton donor/acceptor is the Cys-208. A substrate-binding site is contributed by 209–210 (TH).

It belongs to the aspartate/glutamate racemases family.

The enzyme catalyses L-glutamate = D-glutamate. It participates in cell wall biogenesis; peptidoglycan biosynthesis. Its function is as follows. Provides the (R)-glutamate required for cell wall biosynthesis. The sequence is that of Glutamate racemase from Yersinia pseudotuberculosis serotype IB (strain PB1/+).